The sequence spans 489 residues: Homoserine O-acetyltransferase (489 aa).

Residues 47–354 (NAILVCHALT…NYGHDSFLLE (308 aa)) form the AB hydrolase-1 domain. Ser152 acts as the Nucleophile in catalysis. Arg221 contributes to the substrate binding site. Catalysis depends on residues Asp315 and His348. Asp349 is a binding site for substrate. CBS domains follow at residues 375 to 434 (MIED…NLEE) and 436 to 489 (MTKN…IEEF).

Belongs to the AB hydrolase superfamily. MetX family. In terms of assembly, homodimer.

Its subcellular location is the cytoplasm. It catalyses the reaction L-homoserine + acetyl-CoA = O-acetyl-L-homoserine + CoA. It functions in the pathway amino-acid biosynthesis; L-methionine biosynthesis via de novo pathway; O-acetyl-L-homoserine from L-homoserine: step 1/1. Functionally, transfers an acetyl group from acetyl-CoA to L-homoserine, forming acetyl-L-homoserine. The sequence is that of Homoserine O-acetyltransferase from Methanohalobium evestigatum (strain ATCC BAA-1072 / DSM 3721 / NBRC 107634 / OCM 161 / Z-7303).